Consider the following 215-residue polypeptide: Thymidylate kinase (215 aa).

7–14 is an ATP binding site; sequence GLDGSGKT.

Belongs to the thymidylate kinase family.

The catalysed reaction is dTMP + ATP = dTDP + ADP. Its function is as follows. Phosphorylation of dTMP to form dTDP in both de novo and salvage pathways of dTTP synthesis. This Mycoplasmopsis agalactiae (strain NCTC 10123 / CIP 59.7 / PG2) (Mycoplasma agalactiae) protein is Thymidylate kinase.